Here is a 547-residue protein sequence, read N- to C-terminus: T-complex protein 1 subunit gamma (547 aa).

Gly41 is a binding site for ADP. Gly41 contributes to the ATP binding site. Position 92 (Asp92) interacts with Mg(2+). Residues Gly93, Thr94, Thr95, Ser96, Thr161, and Lys162 each contribute to the ADP site. ATP-binding residues include Gly93, Thr94, and Thr95. Cys365 and Cys371 are disulfide-bonded. Residues Gly410, Gly481, Glu482, Glu496, and Lys501 each contribute to the ADP site. Residues Gly410 and Gly481 each coordinate ATP. Residue Glu496 participates in ATP binding. A compositionally biased stretch (basic and acidic residues) spans 525–534 (HKKKGEDHGR). The tract at residues 525-547 (HKKKGEDHGRQPAAAPEAPQQAE) is disordered. Over residues 535–547 (QPAAAPEAPQQAE) the composition is skewed to low complexity.

Belongs to the TCP-1 chaperonin family. As to quaternary structure, component of the chaperonin-containing T-complex (TRiC), a hexadecamer composed of two identical back-to-back stacked rings enclosing a protein folding chamber. Each ring is made up of eight different subunits: TCP1/CCT1, CCT2, CCT3, CCT4, CCT5, CCT6A/CCT6, CCT7, CCT8.

It is found in the cytoplasm. It catalyses the reaction ATP + H2O = ADP + phosphate + H(+). In terms of biological role, component of the chaperonin-containing T-complex (TRiC), a molecular chaperone complex that assists the folding of actin, tubulin and other proteins upon ATP hydrolysis. In Xenopus laevis (African clawed frog), this protein is T-complex protein 1 subunit gamma (cct3).